Reading from the N-terminus, the 294-residue chain is Probable endonuclease 4 (294 aa).

Zn(2+) contacts are provided by H71, H111, E148, D182, H185, H217, D230, H232, and E262.

The protein belongs to the AP endonuclease 2 family. Zn(2+) is required as a cofactor.

It catalyses the reaction Endonucleolytic cleavage to 5'-phosphooligonucleotide end-products.. In terms of biological role, endonuclease IV plays a role in DNA repair. It cleaves phosphodiester bonds at apurinic or apyrimidinic (AP) sites, generating a 3'-hydroxyl group and a 5'-terminal sugar phosphate. This chain is Probable endonuclease 4, found in Acholeplasma laidlawii (strain PG-8A).